We begin with the raw amino-acid sequence, 200 residues long: Peptidyl-tRNA hydrolase (200 aa).

Y16 contacts tRNA. Catalysis depends on H21, which acts as the Proton acceptor. TRNA contacts are provided by F67, N69, and N115.

This sequence belongs to the PTH family. In terms of assembly, monomer.

Its subcellular location is the cytoplasm. It catalyses the reaction an N-acyl-L-alpha-aminoacyl-tRNA + H2O = an N-acyl-L-amino acid + a tRNA + H(+). In terms of biological role, hydrolyzes ribosome-free peptidyl-tRNAs (with 1 or more amino acids incorporated), which drop off the ribosome during protein synthesis, or as a result of ribosome stalling. Catalyzes the release of premature peptidyl moieties from peptidyl-tRNA molecules trapped in stalled 50S ribosomal subunits, and thus maintains levels of free tRNAs and 50S ribosomes. In Prochlorococcus marinus (strain MIT 9312), this protein is Peptidyl-tRNA hydrolase.